A 228-amino-acid polypeptide reads, in one-letter code: uncharacterized protein (228 aa).

The first 16 residues, 1–16, serve as a signal peptide directing secretion; the sequence is MILLLLALISATTAFQ. The helical transmembrane segment at 206-225 threads the bilayer; sequence LFQTLFFVTLSFLVGSAFAL.

It to A.fulgidus AF_1225.

Its subcellular location is the membrane. This is an uncharacterized protein from Archaeoglobus fulgidus (strain ATCC 49558 / DSM 4304 / JCM 9628 / NBRC 100126 / VC-16).